Consider the following 312-residue polypeptide: Putative S-adenosyl-L-methionine-dependent methyltransferase Mkms_0097 (312 aa).

S-adenosyl-L-methionine contacts are provided by residues Asp-134 and 163 to 164; that span reads DL.

It belongs to the UPF0677 family.

Its function is as follows. Exhibits S-adenosyl-L-methionine-dependent methyltransferase activity. This chain is Putative S-adenosyl-L-methionine-dependent methyltransferase Mkms_0097, found in Mycobacterium sp. (strain KMS).